Here is a 299-residue protein sequence, read N- to C-terminus: MEHFDASLSTYFKAWLGPRDTRVKGWFLLDNYIPTFICSVIYLLIVWLGPKYMRNKQPFSCRGILVVYNLGLTLLSLYMFCELVTGVWEGKYNFFCQGTRTAGESDMKIIRVLWWYYFSKLIEFMDTFFFILRKNNHQITVLHVYHHASMLNIWWFVMNWVPCGHSYFGATLNSFIHVLMYSYYGLSSVLSMRPYLWWKKYITQGQLLQSVLTIIQTSCGVIWPCTFPLGWLYFQIGYMISLIALFTNFYIQSYNKKGASRRKDHLKDHQNGSKAAVNGHTNSFSPLENNVKPRKLRKD.

An N-acetylmethionine modification is found at Met-1. 7 helical membrane-spanning segments follow: residues Trp-26 to Val-46, Ile-64 to Val-84, Val-112 to Leu-132, Met-150 to Ala-170, Leu-172 to Met-192, Gly-205 to Cys-225, and Thr-226 to Phe-246. The disordered stretch occupies residues Arg-262 to Asp-299. The segment covering Gly-279 to Glu-288 has biased composition (polar residues). Position 285 is a phosphoserine (Ser-285).

The protein belongs to the ELO family. ELOVL5 subfamily. In terms of assembly, interacts with TECR.

The protein resides in the endoplasmic reticulum membrane. It is found in the cell projection. The protein localises to the dendrite. The catalysed reaction is a very-long-chain acyl-CoA + malonyl-CoA + H(+) = a very-long-chain 3-oxoacyl-CoA + CO2 + CoA. The enzyme catalyses (6Z,9Z,12Z)-octadecatrienoyl-CoA + malonyl-CoA + H(+) = (8Z,11Z,14Z)-3-oxoeicosatrienoyl-CoA + CO2 + CoA. It carries out the reaction (9Z,12Z,15Z)-octadecatrienoyl-CoA + malonyl-CoA + H(+) = (11Z,14Z,17Z)-3-oxoeicosatrienoyl-CoA + CO2 + CoA. It catalyses the reaction (9Z)-hexadecenoyl-CoA + malonyl-CoA + H(+) = 3-oxo-(11Z)-octadecenoyl-CoA + CO2 + CoA. The catalysed reaction is (9Z)-octadecenoyl-CoA + malonyl-CoA + H(+) = 3-oxo-(11Z)-eicosenoyl-CoA + CO2 + CoA. The enzyme catalyses (11Z)-octadecenoyl-CoA + malonyl-CoA + H(+) = 3-oxo-(13Z)-eicosenoyl-CoA + CO2 + CoA. It carries out the reaction (9Z,12Z)-octadecadienoyl-CoA + malonyl-CoA + H(+) = (11Z,14Z)-3-oxoicosa-11,14-dienoyl-CoA + CO2 + CoA. It catalyses the reaction (6Z,9Z,12Z,15Z)-octadecatetraenoyl-CoA + malonyl-CoA + H(+) = (8Z,11Z,14Z,17Z)-3-oxoicosatetraenoyl-CoA + CO2 + CoA. The catalysed reaction is (5Z,8Z,11Z,14Z)-eicosatetraenoyl-CoA + malonyl-CoA + H(+) = (7Z,10Z,13Z,16Z)-3-oxodocosatetraenoyl-CoA + CO2 + CoA. The enzyme catalyses (5Z,8Z,11Z,14Z,17Z)-eicosapentaenoyl-CoA + malonyl-CoA + H(+) = 3-oxo-(7Z,10Z,13Z,16Z,19Z)-docosapentaenoyl-CoA + CO2 + CoA. Its pathway is lipid metabolism; polyunsaturated fatty acid biosynthesis. Functionally, catalyzes the first and rate-limiting reaction of the four reactions that constitute the long-chain fatty acids elongation cycle. This endoplasmic reticulum-bound enzymatic process allows the addition of 2 carbons to the chain of long- and very long-chain fatty acids (VLCFAs) per cycle. Condensing enzyme that acts specifically toward polyunsaturated acyl-CoA with the higher activity toward C18:3(n-6) acyl-CoA. May participate in the production of monounsaturated and of polyunsaturated VLCFAs of different chain lengths that are involved in multiple biological processes as precursors of membrane lipids and lipid mediators. In conditions where the essential linoleic and alpha linoleic fatty acids are lacking it is also involved in the synthesis of Mead acid from oleic acid. In Pongo abelii (Sumatran orangutan), this protein is Very long chain fatty acid elongase 5.